Consider the following 370-residue polypeptide: Peptidyl-prolyl cis-trans isomerase D (370 aa).

S5 bears the Phosphoserine mark. Residues 19–183 form the PPIase cyclophilin-type domain; the sequence is FFDVDIGGER…KLCVIAECGE (165 aa). K171 bears the N6-acetyllysine mark. Residues 185 to 215 are chaperone activity; it reads KEGDEWGIFPKDGSGDSHPDFPEDADIDLKD. Residue S198 is modified to Phosphoserine. The segment at 214–370 is interaction with HSP90AB1; the sequence is KDVDKILLIS…EKAVYAKMFA (157 aa). 3 TPR repeats span residues 223 to 256, 273 to 306, and 308 to 340; these read SEDL…LDSS, LSCV…DPSN, and KALY…APGD.

This sequence belongs to the cyclophilin-type PPIase family. PPIase D subfamily. In terms of assembly, identified in ESR1 or NR3C1/GCR steroid receptor-chaperone complexes. Found in HSP90 chaperone complexes with kinase clients LCK or EIF2AK1. Two monomers associate with one HSP90 homodimer. Interacts with HSP90AA1. Interacts with HSP90AB1; PPID and FKBP4 compete for binding to HSP90AB1 and the interaction is mutually exclusive with the PPID:HSPA8 interaction. Interacts with HSPA8; PPID and STIP1 but not FKBP4 compete for binding to HSPA8 and the interaction is mutually exclusive with the PPID:HSP90AB1 interaction. Interacts with S100A1 and S100A2; the interactions dissociate the PPID:HSP90AA1 interaction. Interacts with S100A6. Interacts with MYB, ILF2, XRCC6, RACK1 and RPS3. Interacts with cytoplasmic dynein 1 intermediate chain (DYNC1I1 or DYNC1I2).

It localises to the cytoplasm. Its subcellular location is the nucleus. The protein resides in the nucleolus. It is found in the nucleoplasm. The catalysed reaction is [protein]-peptidylproline (omega=180) = [protein]-peptidylproline (omega=0). Its activity is regulated as follows. Less sensitive to inhibition by cyclosporin A than is CYP-18. Functionally, PPIase that catalyzes the cis-trans isomerization of proline imidic peptide bonds in oligopeptides and may therefore assist protein folding. Proposed to act as a co-chaperone in HSP90 complexes such as in unligated steroid receptors heterocomplexes. Different co-chaperones seem to compete for association with HSP90 thus establishing distinct HSP90-co-chaperone-receptor complexes with the potential to exert tissue-specific receptor activity control. May have a preference for estrogen receptor complexes and is not found in glucocorticoid receptor complexes. May be involved in cytoplasmic dynein-dependent movement of the receptor from the cytoplasm to the nucleus. May regulate MYB by inhibiting its DNA-binding activity. Involved in regulation of AHR signaling by promoting the formation of the AHR:ARNT dimer; the function is independent of HSP90 but requires the chaperone activity region. Involved in regulation of UV radiation-induced apoptosis. The protein is Peptidyl-prolyl cis-trans isomerase D of Rattus norvegicus (Rat).